The primary structure comprises 206 residues: N-(5'-phosphoribosyl)anthranilate isomerase (206 aa).

The protein belongs to the TrpF family.

The catalysed reaction is N-(5-phospho-beta-D-ribosyl)anthranilate = 1-(2-carboxyphenylamino)-1-deoxy-D-ribulose 5-phosphate. It functions in the pathway amino-acid biosynthesis; L-tryptophan biosynthesis; L-tryptophan from chorismate: step 3/5. The polypeptide is N-(5'-phosphoribosyl)anthranilate isomerase (Pseudomonas putida (strain W619)).